The chain runs to 949 residues: MAQQYQPGQRWISDSEAELGLGTVLAQDGRLLTVLYPATGDTRQYALRNAPLTRVRFSPGDSITHFEGWKMTVQEVDDVDGLLVYHGLNGQNEAVTLPETQLSNFIQFRLASDRLFAGQIDPLAWFSLRYHTLEHTSRQLQSSLWGLGGVRAQPIAHQLHIAREVADRIAPRVLLADEVGLGKTIEAGLVIHRQLLSGRASRVLILVPENLQHQWLVEMRRRFNLQVALFDEERFIESDASNPFEDTQLALVALEWLVDDEKAQDALFAAGWDLMVVDEAHHLVWHEDQVSPEYALVEQLAETIPGVLLLTATPEQLGQDSHFARLRLLDPNRFHDLAAFRAESENYRPVAEAVQELMDKGRLSPEAHKTIHGFLGNEGEALLAAVNDGDSEASARLVRELLDRHGTGRVLFRNTRAAVQGFPERKLHAYPLPCPDEYLELPLGEHAELYPEVSFQAQPDVSDDEQRWWKFDPRVEWLIDQLKMLKRTKVLVICAHAETAMDLEDALRVRSGIPATVFHEGMNILERDRAAAYFADEEFGAQVLICSEIGSEGRNFQFAHHLVLFDLPSHPDLLEQRIGRLDRIGQKHVIELHVPYLETSPQERLFQWYHEALNAFLNTCPTGNALQHQFGPRLLPLLENADDGEWQALIDAARGERERLEAELHTGRDRLLELNSGGAGEGDALVEAILEQDDQFALPIYMETLFDAFGIDSEDHSENALILKPSEKMLDASFPLGDDEGVTITYDRNQALSREDMQFITWEHPMVQGGMDLVLSGSMGNTAVALIKNKALKPGTVLLELLYVSEVVAPRSLQLGRYLPPAALRCLLDANGNDLSARVAFETLNDQLESVPKASANKFIQAQRDQLAPKINAGEAKVAPRHAERVAEAQRRLAADTDEELARLTALQAVNPTVRDSELVALRQQREQGLAMLEKAALRLEAIRVLVAG.

In terms of domain architecture, Helicase ATP-binding spans 164–332; that stretch reads EVADRIAPRV…FARLRLLDPN (169 aa). Residue 177-184 participates in ATP binding; the sequence is DEVGLGKT. A DEAH box motif is present at residues 278 to 281; sequence DEAH. Residues 474 to 628 enclose the Helicase C-terminal domain; the sequence is RVEWLIDQLK…TCPTGNALQH (155 aa).

Belongs to the SNF2/RAD54 helicase family. RapA subfamily. As to quaternary structure, interacts with the RNAP. Has a higher affinity for the core RNAP than for the holoenzyme. Its ATPase activity is stimulated by binding to RNAP.

Its function is as follows. Transcription regulator that activates transcription by stimulating RNA polymerase (RNAP) recycling in case of stress conditions such as supercoiled DNA or high salt concentrations. Probably acts by releasing the RNAP, when it is trapped or immobilized on tightly supercoiled DNA. Does not activate transcription on linear DNA. Probably not involved in DNA repair. The sequence is that of RNA polymerase-associated protein RapA from Pseudomonas fluorescens (strain ATCC BAA-477 / NRRL B-23932 / Pf-5).